We begin with the raw amino-acid sequence, 169 residues long: Protein HIGH ARSENIC CONTENT 1, mitochondrial (169 aa).

The transit peptide at 1–59 directs the protein to the mitochondrion; the sequence is MYTYSLLNLSHCRRQTRKKRKTDHTEGFLMEETKPKTVEDVETVDVYTAKGFLSTGHRY. Residues 60-153 enclose the Rhodanese domain; that stretch reads LDVRTNEEFA…WVDAGFAGDK (94 aa). Residue Cys113 is the Cysteine persulfide intermediate of the active site.

Expressed in root hairs, epidermal cells at the surface of the root and in the pericycle within the stele.

It is found in the mitochondrion. The enzyme catalyses [glutaredoxin]-dithiol + arsenate + glutathione + H(+) = glutathionyl-S-S-[glutaredoxin] + arsenite + H2O. Its activity is regulated as follows. Inhibited by trobenzenesulphonic acid (TNBS). Arsenate reductase critical for arsenic tolerance. Reduces arsenate to arsenite in the root, facilitating efflux of arsenic back into the soil to limit both its accumulation in the root and transport to the shoot. Essential for arsenite efflux from the root, but not necessary for arsenate uptake. The chain is Protein HIGH ARSENIC CONTENT 1, mitochondrial from Arabidopsis thaliana (Mouse-ear cress).